The sequence spans 159 residues: Phosphopantetheine adenylyltransferase (159 aa).

Substrate is bound at residue threonine 10. Residues threonine 10 to phenylalanine 11 and histidine 18 contribute to the ATP site. Lysine 42, methionine 74, and arginine 88 together coordinate substrate. Residues glycine 89–arginine 91, glutamate 99, and tryptophan 124–serine 130 contribute to the ATP site.

It belongs to the bacterial CoaD family. In terms of assembly, homohexamer. It depends on Mg(2+) as a cofactor.

It is found in the cytoplasm. The enzyme catalyses (R)-4'-phosphopantetheine + ATP + H(+) = 3'-dephospho-CoA + diphosphate. The protein operates within cofactor biosynthesis; coenzyme A biosynthesis; CoA from (R)-pantothenate: step 4/5. Reversibly transfers an adenylyl group from ATP to 4'-phosphopantetheine, yielding dephospho-CoA (dPCoA) and pyrophosphate. The chain is Phosphopantetheine adenylyltransferase from Shigella dysenteriae serotype 1 (strain Sd197).